We begin with the raw amino-acid sequence, 236 residues long: 7-cyano-7-deazaguanine synthase (236 aa).

13–23 lines the ATP pocket; it reads FSGGQDSTVCL. Zn(2+) contacts are provided by Cys200, Cys215, Cys218, and Cys221.

Belongs to the QueC family. Requires Zn(2+) as cofactor.

It carries out the reaction 7-carboxy-7-deazaguanine + NH4(+) + ATP = 7-cyano-7-deazaguanine + ADP + phosphate + H2O + H(+). It participates in purine metabolism; 7-cyano-7-deazaguanine biosynthesis. In terms of biological role, catalyzes the ATP-dependent conversion of 7-carboxy-7-deazaguanine (CDG) to 7-cyano-7-deazaguanine (preQ(0)). The polypeptide is 7-cyano-7-deazaguanine synthase (Parvibaculum lavamentivorans (strain DS-1 / DSM 13023 / NCIMB 13966)).